The primary structure comprises 221 residues: Small ribosomal subunit protein uS3c (221 aa).

The region spanning 39–109 is the KH type-2 domain; that stretch reads LRDYLKTRLA…RVIVHVVEIA (71 aa).

Belongs to the universal ribosomal protein uS3 family. As to quaternary structure, part of the 30S ribosomal subunit.

Its subcellular location is the plastid. The protein resides in the chloroplast. This chain is Small ribosomal subunit protein uS3c (rps3), found in Nephroselmis olivacea (Green alga).